Consider the following 88-residue polypeptide: DNA-directed RNA polymerase subunit omega (88 aa).

This sequence belongs to the RNA polymerase subunit omega family. As to quaternary structure, the RNAP catalytic core consists of 2 alpha, 1 beta, 1 beta' and 1 omega subunit. When a sigma factor is associated with the core the holoenzyme is formed, which can initiate transcription.

The catalysed reaction is RNA(n) + a ribonucleoside 5'-triphosphate = RNA(n+1) + diphosphate. Functionally, promotes RNA polymerase assembly. Latches the N- and C-terminal regions of the beta' subunit thereby facilitating its interaction with the beta and alpha subunits. In Yersinia pestis (strain Pestoides F), this protein is DNA-directed RNA polymerase subunit omega.